We begin with the raw amino-acid sequence, 470 residues long: Cysteine--tRNA ligase (470 aa).

Position 28 (cysteine 28) interacts with Zn(2+). Residues 30–40 (PTVYNYIHIGN) carry the 'HIGH' region motif. Residues cysteine 212, histidine 237, and glutamate 241 each contribute to the Zn(2+) site. Positions 271–275 (KMSKS) match the 'KMSKS' region motif. Position 274 (lysine 274) interacts with ATP.

This sequence belongs to the class-I aminoacyl-tRNA synthetase family. Monomer. Requires Zn(2+) as cofactor.

Its subcellular location is the cytoplasm. It catalyses the reaction tRNA(Cys) + L-cysteine + ATP = L-cysteinyl-tRNA(Cys) + AMP + diphosphate. This Lactiplantibacillus plantarum (strain ATCC BAA-793 / NCIMB 8826 / WCFS1) (Lactobacillus plantarum) protein is Cysteine--tRNA ligase.